The primary structure comprises 3114 residues: Centromere protein F (3114 aa).

The interaction with SNAP25 and required for localization to the cytoplasm stretch occupies residues 1-481; the sequence is MSWALEEWKE…IKENELRRSM (481 aa). The stretch at 13–131 forms a coiled coil; sequence PTRALQKIQE…KSELERSQQA (119 aa). S106 is subject to Phosphoserine. Phosphothreonine occurs at positions 144, 151, and 154. Y158 carries the post-translational modification Phosphotyrosine. A compositionally biased stretch (polar residues) spans 211-235; that stretch reads QASSSVFSWQQEKTPSHLSSNSQRT. Positions 211–236 are disordered; sequence QASSSVFSWQQEKTPSHLSSNSQRTP. Phosphoserine occurs at positions 242 and 276. A coiled-coil region spans residues 280 to 685; that stretch reads LDQLKAQNQE…SVEIRNLHNV (406 aa). A phosphoserine mark is found at S773, S783, S821, S834, S838, and S876. 2 coiled-coil regions span residues 899-989 and 1196-1244; these read VAET…LNQE and LEVK…IRGD. Phosphoserine occurs at positions 1248, 1255, and 1259. The stretch at 1549-1646 forms a coiled coil; it reads VEELESLCEV…ELEVARLQLQ (98 aa). Phosphoserine occurs at positions 1651, 1652, and 1654. 2 disordered regions span residues 1667–1690 and 1710–1746; these read RNESCDISKEHTSETTERTPKHDV and TETGAVKPTGECSGEQSPDTNYEPPGEDKTQGSSECI. Residues 1669-1690 are compositionally biased toward basic and acidic residues; the sequence is ESCDISKEHTSETTERTPKHDV. A Phosphoserine modification is found at S1726. T1862 carries the post-translational modification Phosphothreonine. 2 positions are modified to phosphoserine: S1868 and S1892. Coiled-coil stretches lie at residues 1890–2078 and 2107–2891; these read NDSW…LQAR and LSST…LCSQ. Positions 2026–2351 are interaction with NDE1 and NDEL1; the sequence is LLKDKTHLQE…ERELEIARTN (326 aa). 2 tandem repeats follow at residues 2111–2290 and 2293–2472. The tract at residues 2111-2472 is 2 X 177 AA tandem repeats; that stretch reads QEEVHQLRRG…ACKAKEQNLS (362 aa). Residues 2392–2829 form a sufficient for self-association region; sequence SEKENLTNEL…QAAQEKQKTG (438 aa). Residues 2392–3017 are sufficient for centromere localization; sequence SEKENLTNEL…ATRTSPRLAA (626 aa). 2 positions are modified to phosphoserine: S2416 and S2417. At K2779 the chain carries N6-acetyllysine. The tract at residues 2831-3017 is sufficient for nuclear localization; it reads VMDTKVDELT…ATRTSPRLAA (187 aa). The interval 2891 to 2977 is disordered; the sequence is QQSKQDSRGS…AEDTEGTEFE (87 aa). 4 positions are modified to phosphoserine: S2900, S2911, S2922, and S2936. Residues 2919 to 2936 carry the Nuclear localization signal motif; the sequence is KRLSSGQNKASGKRQRSS. Position 2949 is a phosphothreonine (T2949). S2952, S2998, S3023, and S3026 each carry phosphoserine. The disordered stretch occupies residues 3024-3114; the sequence is PLSLGKENLA…SNGSENCKVQ (91 aa). Over residues 3033 to 3045 the composition is skewed to polar residues; that stretch reads AESSKPTAGGSRS. Phosphoserine is present on residues S3054, S3079, and S3083. The span at 3079–3089 shows a compositional bias: basic and acidic residues; sequence SPTDSPREGLR. Over residues 3105–3114 the composition is skewed to polar residues; sequence SNGSENCKVQ. Cysteine methyl ester is present on C3111. The S-farnesyl cysteine moiety is linked to residue C3111. Residues 3112–3114 constitute a propeptide, removed in mature form; sequence KVQ.

It belongs to the centromere protein F family. Interacts with and STX4 (via C-terminus). Interacts (via N-terminus) with RBL1, RBL2 and SNAP25. Self-associates. Interacts with CENP-E and BUBR1 (via C-terminus). Interacts (via C-terminus) with NDE1, NDEL1 and RB1. Post-translationally, hyperphosphorylated during mitosis.

It localises to the cytoplasm. It is found in the perinuclear region. Its subcellular location is the nucleus matrix. The protein localises to the chromosome. The protein resides in the centromere. It localises to the kinetochore. It is found in the cytoskeleton. Its subcellular location is the spindle. Its function is as follows. Required for kinetochore function and chromosome segregation in mitosis. Required for kinetochore localization of dynein, LIS1, NDE1 and NDEL1. Regulates recycling of the plasma membrane by acting as a link between recycling vesicles and the microtubule network though its association with STX4 and SNAP25. Acts as a potential inhibitor of pocket protein-mediated cellular processes during development by regulating the activity of RB proteins during cell division and proliferation. May play a regulatory or permissive role in the normal embryonic cardiomyocyte cell cycle and in promoting continued mitosis in transformed, abnormally dividing neonatal cardiomyocytes. Interaction with RB directs embryonic stem cells toward a cardiac lineage. Involved in the regulation of DNA synthesis and hence cell cycle progression, via its C-terminus. Has a potential role regulating skeletal myogenesis and in cell differentiation in embryogenesis. Involved in dendritic cell regulation of T-cell immunity against chlamydia. The polypeptide is Centromere protein F (CENPF) (Homo sapiens (Human)).